We begin with the raw amino-acid sequence, 354 residues long: Hyaluronan and proteoglycan link protein 1 (354 aa).

A propeptide spanning residues 1-9 is cleaved from the precursor; it reads MKSLLLLVL. N-linked (GlcNAc...) asparagine glycosylation is found at Asn-21 and Asn-56. The Ig-like V-type domain occupies 38 to 152; the sequence is PRLLVEAEQA…EGLEDDTAVV (115 aa). Disulfide bonds link Cys-61–Cys-139, Cys-181–Cys-252, Cys-205–Cys-226, Cys-279–Cys-349, and Cys-304–Cys-325. 2 consecutive Link domains span residues 159-254 and 259-351; these read VVFP…FCFT and GRFY…YCFR.

The protein belongs to the HAPLN family.

Its subcellular location is the secreted. It localises to the extracellular space. The protein localises to the extracellular matrix. Stabilizes the aggregates of proteoglycan monomers with hyaluronic acid in the extracellular cartilage matrix. The sequence is that of Hyaluronan and proteoglycan link protein 1 (HAPLN1) from Sus scrofa (Pig).